The sequence spans 818 residues: Adhesion G protein-coupled receptor E5 (818 aa).

The N-terminal stretch at 1–23 (MRGVRCPGLLVVCILLSLSGAGT) is a signal peptide. The Extracellular segment spans residues 24 to 533 (QKAESKNCAK…VQDPRLELIT (510 aa)). In terms of domain architecture, EGF-like 1 spans 27–68 (ESKNCAKWCPINSKCVSNRSCVCKPGFSSEKELITNPAESCE). Disulfide bonds link C31–C41, C35–C47, C49–C67, C73–C86, C80–C95, C97–C118, C169–C182, C176–C191, C193–C212, C218–C231, C225–C240, and C242–C260. N44 is a glycosylation site (N-linked (GlcNAc...) asparagine). Residues 69-119 (DINECLLPGFSCGDFAMCKNSEGSYTCVCNLGYKLLSGAESFVNESENTCQ) form the EGF-like 2; calcium-binding domain. N-linked (GlcNAc...) asparagine glycosylation occurs at N112. Positions 165–213 (DVNECISGQNHCHQSTHCINKLGGYSCICRQGWKPVPGSPNGPVSTVCE) constitute an EGF-like 3; calcium-binding domain. The region spanning 214–261 (DVDECSSGQHQCHNSTVCKNTVGSYKCHCRPGWKPTSGSLRGPDTICQ) is the EGF-like 4; calcium-binding domain. The N-linked (GlcNAc...) asparagine glycan is linked to N227. 2 N-linked (GlcNAc...) asparagine glycosylation sites follow: N299 and N395. The 179-residue stretch at 347 to 525 (PFTYTSPSNT…AILMAQYHVQ (179 aa)) folds into the GAIN-B domain. Phosphoserine is present on S425. 2 N-linked (GlcNAc...) asparagine glycosylation sites follow: N461 and N502. Intrachain disulfides connect C482/C507 and C499/C509. Residues 482-525 (CAFWKAHNGNGYWDTDGCSMNGTGFCHCNHLTSFAILMAQYHVQ) are GPS. The helical transmembrane segment at 534-554 (KVGLLLSLICLLLCILTFLLV) threads the bilayer. Topologically, residues 555 to 562 (KPIQSSRT) are cytoplasmic. The chain crosses the membrane as a helical span at residues 563-583 (MVHLHLCICLFLGSIIFLVGV). Topologically, residues 584-602 (ENEGGEVGLRCRLVAMMLH) are extracellular. The helical transmembrane segment at 603–623 (FCFLAAFCWMALEGVELYFLV) threads the bilayer. Residues 624-637 (VRVFQGQGLSTWQR) lie on the Cytoplasmic side of the membrane. The chain crosses the membrane as a helical span at residues 638–658 (CLIGYGVPLLIVAISMAVVKM). Over 659–679 (DGYGHATYCWLDFRKQGFLWS) the chain is Extracellular. A helical transmembrane segment spans residues 680–700 (FSGPVAFIIFCNAAIFVITVW). The Cytoplasmic segment spans residues 701–723 (KLTKKFSEINPNMKKLRKARVLT). The chain crosses the membrane as a helical span at residues 724–744 (ITAIAQLLVLGCTWGFGLFLF). Topologically, residues 745–752 (NPHSTWLS) are extracellular. A helical transmembrane segment spans residues 753 to 773 (YIFTLLNCLQGLFLYVMLCLL). At 774–818 (NKKVREEYWKWACMVTGSKYTEFNSSTTGTGTSQTRALRSSESGM) the chain is on the cytoplasmic side. At S798 the chain carries Phosphoserine. Residues 799–808 (STTGTGTSQT) are compositionally biased toward low complexity. The interval 799 to 818 (STTGTGTSQTRALRSSESGM) is disordered. T808 carries the post-translational modification Phosphothreonine. Residues 809–818 (RALRSSESGM) show a composition bias toward polar residues. S814 and S816 each carry phosphoserine.

The protein belongs to the G-protein coupled receptor 2 family. LN-TM7 subfamily. Forms a heterodimer, consisting of a large extracellular region (alpha subunit) non-covalently linked to a seven-transmembrane moiety (beta subunit). Interacts with complement decay-accelerating factor (DAF). The largest isoform (isoform 1) do not interact with DAF. Also interacts with chondroitin sulfate. In terms of processing, proteolytically cleaved into 2 subunits, an extracellular alpha subunit and a seven-transmembrane subunit. As to expression, although predominantly expressed by cells of the immune system, expressed ubiquitously with particularly high levels of expression in the lung and the thymus gland. In the spleen, expression is detected on most myeloid cells and variable portions of T-cells, B-cells and NK cells. In the bone marrow, expressed in nearly all myeloid cells, whereas little if any expression is found on erythroid cells.

It is found in the cell membrane. It localises to the secreted. Its subcellular location is the extracellular space. In terms of biological role, receptor potentially involved in both adhesion and signaling processes early after leukocyte activation. Plays an essential role in leukocyte migration. This is Adhesion G protein-coupled receptor E5 from Mus musculus (Mouse).